A 297-amino-acid chain; its full sequence is Phosphoribosylaminoimidazole-succinocarboxamide synthase (297 aa).

This sequence belongs to the SAICAR synthetase family.

The catalysed reaction is 5-amino-1-(5-phospho-D-ribosyl)imidazole-4-carboxylate + L-aspartate + ATP = (2S)-2-[5-amino-1-(5-phospho-beta-D-ribosyl)imidazole-4-carboxamido]succinate + ADP + phosphate + 2 H(+). It functions in the pathway purine metabolism; IMP biosynthesis via de novo pathway; 5-amino-1-(5-phospho-D-ribosyl)imidazole-4-carboxamide from 5-amino-1-(5-phospho-D-ribosyl)imidazole-4-carboxylate: step 1/2. The polypeptide is Phosphoribosylaminoimidazole-succinocarboxamide synthase (Rhodococcus erythropolis (strain PR4 / NBRC 100887)).